A 324-amino-acid polypeptide reads, in one-letter code: 4-hydroxybenzoyl-CoA reductase subunit beta (324 aa).

Residues 2–217 (NILTDFRTHR…AAIEVPPTGA (216 aa)) form the FAD-binding PCMH-type domain. Residues 29–36 (PLGAGTDL), Thr-111, Asn-115, and Gln-118 each bind FAD. Positions 122, 138, 146, and 155 each coordinate [4Fe-4S] cluster. The FAD site is built by Asp-162 and Lys-224.

In terms of assembly, heterohexamer of two alpha, two beta and two gamma subunits. FAD serves as cofactor. [4Fe-4S] cluster is required as a cofactor.

It catalyses the reaction oxidized 2[4Fe-4S]-[ferredoxin] + benzoyl-CoA + H2O = 4-hydroxybenzoyl-CoA + reduced 2[4Fe-4S]-[ferredoxin] + 2 H(+). Inactivated by low concentrations of cyanide in vitro. Its function is as follows. Component of a complex that catalyzes the reductive dehydroxylation of 4-hydroxybenzoyl-CoA to benzoyl-CoA. Reaction is not reversible. Is a key enzyme in the anaerobic degradation of phenolic compounds. The polypeptide is 4-hydroxybenzoyl-CoA reductase subunit beta (hcrB) (Thauera aromatica).